Here is a 397-residue protein sequence, read N- to C-terminus: Lymphoid enhancer-binding factor 1 (397 aa).

Positions 1–60 (MPQLSGGGGGGDPELCATDEMIPFKDEGDPQKEKIFAEISHPEEEGDLADIKSSLVNESE) are CTNNB1-binding. K25 is covalently cross-linked (Glycyl lysine isopeptide (Lys-Gly) (interchain with G-Cter in SUMO)). The tract at residues 38–102 (EISHPEEEGD…KHPDGGLYNK (65 aa)) is disordered. The span at 80 to 96 (PYHDKAREHPDDGKHPD) shows a compositional bias: basic and acidic residues. S130 carries the phosphoserine modification. T153 carries the phosphothreonine; by NLK modification. Position 164 is a phosphoserine; by NLK (S164). 2 disordered regions span residues 164-190 (SPGS…PAPE) and 266-296 (VKQE…KRPH). A Glycyl lysine isopeptide (Lys-Gly) (interchain with G-Cter in SUMO) cross-link involves residue K267. Basic and acidic residues predominate over residues 267–294 (KQEHPHTDSDLMHVKPEHEQRKEQEPKR). The HMG box DNA-binding region spans 297–365 (IKKPLNAFML…LHMQLYPGWS (69 aa)). Positions 367–397 (RDNYGKKKKRKREKLQESTSGTGPRMTAAYI) are disordered.

It belongs to the TCF/LEF family. As to quaternary structure, binds the armadillo repeat of CTNNB1 and forms a stable complex. Interacts with TLE1, PIASG, ALYREF/THOC4, EP300, MDFI and MDFIC. Interacts with DAZAP2. Phosphorylated at Thr-153 and/or Ser-164 by NLK. Phosphorylation by NLK at these sites represses LEF1-mediated transcriptional activation of target genes of the canonical Wnt signaling pathway.

It is found in the nucleus. Transcription factor that binds DNA in a sequence-specific manner. Participates in the Wnt signaling pathway. Activates transcription of target genes in the presence of CTNNB1 and EP300. PIASG antagonizes both Wnt-dependent and Wnt-independent activation by LEF1. TLE1, TLE2, TLE3 and TLE4 repress transactivation mediated by LEF1 and CTNNB1. Regulates T-cell receptor alpha enhancer function. Required for IL17A expressing gamma-delta T-cell maturation and development, via binding to regulator loci of BLK to modulate expression. Acts as a positive regulator of odontoblast differentiation during mesenchymal tooth germ formation, expression is repressed during the bell stage by MSX1-mediated inhibition of CTNNB1 signaling. May play a role in hair cell differentiation and follicle morphogenesis. The polypeptide is Lymphoid enhancer-binding factor 1 (Rattus norvegicus (Rat)).